The chain runs to 445 residues: Inositol-pentakisphosphate 2-kinase IPK1 (445 aa).

ATP-binding positions include 19–22 and R40; that span reads GAAN. R127 contacts substrate. ATP-binding positions include 144–146 and 162–164; these read SDH and EIK. An EXKPK motif motif is present at residues 162–166; sequence EIKAK. Substrate contacts are provided by K166, K196, and N234. Residue R237 participates in ATP binding. The Zn(2+) site is built by H312, C322, C325, and H341. D363 is a substrate binding site. ATP is bound at residue D402. Residues K406, K410, and Y414 each contribute to the substrate site.

This sequence belongs to the IPK1 type 2 family. It depends on Zn(2+) as a cofactor.

The enzyme catalyses 1D-myo-inositol 1,3,4,5,6-pentakisphosphate + ATP = 1D-myo-inositol hexakisphosphate + ADP + H(+). Its function is as follows. Phosphorylates Ins(1,3,4,5,6)P5 at position 2 to form Ins(1,2,3,4,5,6)P6 (InsP6 or phytate). Phytate is a regulator of intracellular signaling, a highly abundant animal antinutrient, and a phosphate store in plant seeds. Also phosphorylates Ins(1,3,4,6)P4 and Ins(1,4,5,6)P4 to produce Ins(1,2,3,4,6)P5 and Ins(1,2,4,5,6)P5. This is Inositol-pentakisphosphate 2-kinase IPK1 from Oryza sativa subsp. indica (Rice).